The sequence spans 135 residues: MSKFAQKIEKLKKSLLNRLEEQDIVSVDVASKGSVYIGLLGFRQDDRKAVTLYVRGQNPKKKLYVNLDEVDNYIRVFEFLKKHKEELEKIVGKPPKSTSAPDIDELEEEPDEETEEKSEEKTEKKKKESEDEDEL.

The stretch at 68–135 forms a coiled coil; sequence DEVDNYIRVF…KKESEDEDEL (68 aa). The interval 88-135 is disordered; it reads EKIVGKPPKSTSAPDIDELEEEPDEETEEKSEEKTEKKKKESEDEDEL. The span at 102 to 117 shows a compositional bias: acidic residues; it reads DIDELEEEPDEETEEK. The span at 118 to 129 shows a compositional bias: basic and acidic residues; it reads SEEKTEKKKKES.

This is an uncharacterized protein from Acidianus hospitalis (AFV-1).